The following is an 833-amino-acid chain: Probable serine/threonine-protein kinase DDB_G0277165 (833 aa).

The 254-residue stretch at 9–262 folds into the Protein kinase domain; that stretch reads FIIGKTLGQG…IKEIKEHPWF (254 aa). ATP-binding positions include 15–23 and Lys38; that span reads LGQGTTGKV. Catalysis depends on Asp133, which acts as the Proton acceptor. The 42-residue stretch at 288 to 329 folds into the UBA domain; the sequence is QIDEDIFRSLMALGVGTIDEVKQQLVSNQKSATLIYYRLLEE. Over residues 338–351 the composition is skewed to basic and acidic residues; that stretch reads NKYGYKPKETRRNS. 3 disordered regions span residues 338 to 472, 528 to 626, and 764 to 799; these read NKYG…ISPS, QALQ…PIEI, and FINP…GGQN. Low complexity-rich tracts occupy residues 365–432 and 441–459; these read NNNN…NNNN and SSSQ…QIPS. Residues 460–472 show a composition bias toward polar residues; sequence NSTSQESMQISPS. Over residues 528–589 the composition is skewed to low complexity; the sequence is QALQQHHQQQ…SSTSTSPQLS (62 aa). Positions 600 to 625 are enriched in polar residues; that stretch reads GSMTASTNPATSPTMSHRGKTSSPIE.

This sequence belongs to the protein kinase superfamily. CAMK Ser/Thr protein kinase family.

The enzyme catalyses L-seryl-[protein] + ATP = O-phospho-L-seryl-[protein] + ADP + H(+). It carries out the reaction L-threonyl-[protein] + ATP = O-phospho-L-threonyl-[protein] + ADP + H(+). The sequence is that of Probable serine/threonine-protein kinase DDB_G0277165 from Dictyostelium discoideum (Social amoeba).